We begin with the raw amino-acid sequence, 436 residues long: Zinc finger protein 101 (436 aa).

The 79-residue stretch at 4–82 (VAFEDVAVNF…RKEGNEHRET (79 aa)) folds into the KRAB domain. The segment at 102–124 (CKCSVCGKVFLRHSFLDRHMRAH) adopts a C2H2-type 1 zinc-finger fold. A compositionally biased stretch (basic and acidic residues) spans 128–141 (KRSECGGEWRETPR). The interval 128-164 (KRSECGGEWRETPRKQKQHGKASISPSSGARRTVTPT) is disordered. Over residues 151–163 (ISPSSGARRTVTP) the composition is skewed to polar residues. The C2H2-type 2 zinc finger occupies 169–191 (YECKVCGKAFNSPNLFQIHQRTH). A C2H2-type 3; degenerate zinc finger spans residues 197–219 (YKCREIVRAFTVSSFFRKHGKMH). 7 consecutive C2H2-type zinc fingers follow at residues 225-247 (YECK…VRTH), 253-276 (YKCK…IRSH), 282-304 (HQCQ…ERTH), 310-332 (YECQ…ERAH), 338-360 (YECN…KKTH), 366-388 (YECT…EMTH), and 394-416 (FDCK…ERTH).

This sequence belongs to the krueppel C2H2-type zinc-finger protein family. Expressed in a variety of adult and fetal tissues.

It localises to the nucleus. May be involved in transcriptional regulation. The protein is Zinc finger protein 101 (ZNF101) of Homo sapiens (Human).